A 268-amino-acid chain; its full sequence is Glutamate racemase (268 aa).

Substrate contacts are provided by residues 14–15 (DS) and 46–47 (YG). C78 functions as the Proton donor/acceptor in the catalytic mechanism. A substrate-binding site is contributed by 79-80 (NS). C190 serves as the catalytic Proton donor/acceptor. Position 191–192 (191–192 (TH)) interacts with substrate.

It belongs to the aspartate/glutamate racemases family.

It carries out the reaction L-glutamate = D-glutamate. The protein operates within cell wall biogenesis; peptidoglycan biosynthesis. Its function is as follows. Provides the (R)-glutamate required for cell wall biosynthesis. The sequence is that of Glutamate racemase from Treponema pallidum (strain Nichols).